Consider the following 275-residue polypeptide: Expansin-A23 (275 aa).

A signal peptide spans 1–27; it reads MNLLGKMIYVEGFMMIMATLLVSMSYG. The 111-residue stretch at 72–182 folds into the Expansin-like EG45 domain; it reads QGACGYGDLF…RRISCARTGG (111 aa). The 80-residue stretch at 192 to 271 folds into the Expansin-like CBD domain; that stretch reads YFLMILPYNV…NWGFGQTFDG (80 aa).

The protein belongs to the expansin family. Expansin A subfamily.

The protein localises to the secreted. The protein resides in the cell wall. It is found in the membrane. Functionally, causes loosening and extension of plant cell walls by disrupting non-covalent bonding between cellulose microfibrils and matrix glucans. No enzymatic activity has been found. This chain is Expansin-A23 (EXPA23), found in Arabidopsis thaliana (Mouse-ear cress).